The primary structure comprises 483 residues: Glutamyl-tRNA(Gln) amidotransferase subunit A (483 aa).

Active-site charge relay system residues include Lys-77 and Ser-152. Ser-176 functions as the Acyl-ester intermediate in the catalytic mechanism.

This sequence belongs to the amidase family. GatA subfamily. As to quaternary structure, heterotrimer of A, B and C subunits.

It catalyses the reaction L-glutamyl-tRNA(Gln) + L-glutamine + ATP + H2O = L-glutaminyl-tRNA(Gln) + L-glutamate + ADP + phosphate + H(+). In terms of biological role, allows the formation of correctly charged Gln-tRNA(Gln) through the transamidation of misacylated Glu-tRNA(Gln) in organisms which lack glutaminyl-tRNA synthetase. The reaction takes place in the presence of glutamine and ATP through an activated gamma-phospho-Glu-tRNA(Gln). The polypeptide is Glutamyl-tRNA(Gln) amidotransferase subunit A (Listeria monocytogenes serovar 1/2a (strain ATCC BAA-679 / EGD-e)).